We begin with the raw amino-acid sequence, 1396 residues long: DNA-directed RNA polymerase subunit beta' (1396 aa).

Residues cysteine 72, cysteine 74, cysteine 87, and cysteine 90 each contribute to the Zn(2+) site. Mg(2+) is bound by residues aspartate 463, aspartate 465, and aspartate 467. Residues cysteine 814, cysteine 889, cysteine 896, and cysteine 899 each contribute to the Zn(2+) site.

The protein belongs to the RNA polymerase beta' chain family. The RNAP catalytic core consists of 2 alpha, 1 beta, 1 beta' and 1 omega subunit. When a sigma factor is associated with the core the holoenzyme is formed, which can initiate transcription. The cofactor is Mg(2+). Zn(2+) is required as a cofactor.

The enzyme catalyses RNA(n) + a ribonucleoside 5'-triphosphate = RNA(n+1) + diphosphate. Its function is as follows. DNA-dependent RNA polymerase catalyzes the transcription of DNA into RNA using the four ribonucleoside triphosphates as substrates. This is DNA-directed RNA polymerase subunit beta' from Chlamydia trachomatis serovar L2b (strain UCH-1/proctitis).